A 1058-amino-acid polypeptide reads, in one-letter code: Carbamoyl phosphate synthase large chain (1058 aa).

Residues 1–401 are carboxyphosphate synthetic domain; sequence MSKRKDIQKI…SLLKACRSLE (401 aa). The ATP site is built by arginine 129, arginine 169, glycine 175, glycine 176, arginine 208, isoleucine 210, glutamate 215, glycine 241, isoleucine 242, histidine 243, glutamine 284, and glutamate 298. One can recognise an ATP-grasp 1 domain in the interval 133–327; sequence KQLMQELDQP…IAKLAAKIAV (195 aa). Mg(2+)-binding residues include glutamine 284, glutamate 298, and asparagine 300. The Mn(2+) site is built by glutamine 284, glutamate 298, and asparagine 300. The tract at residues 402–546 is oligomerization domain; sequence IGVCHNEMTS…YSTYELENES (145 aa). Residues 547–929 form a carbamoyl phosphate synthetic domain region; it reads VQSNKESILV…ALYKAFEANN (383 aa). The ATP-grasp 2 domain occupies 671–861; it reads EKALKELGIP…MAQIATKLIL (191 aa). ATP-binding residues include arginine 707, serine 746, isoleucine 748, glutamate 752, glycine 777, valine 778, histidine 779, serine 780, glutamine 820, and glutamate 832. Mg(2+)-binding residues include glutamine 820, glutamate 832, and asparagine 834. Positions 820, 832, and 834 each coordinate Mn(2+). In terms of domain architecture, MGS-like spans 930–1058; it reads SHLSEFGQIV…ESRCFNIEAI (129 aa). The tract at residues 930–1058 is allosteric domain; sequence SHLSEFGQIV…ESRCFNIEAI (129 aa).

This sequence belongs to the CarB family. In terms of assembly, composed of two chains; the small (or glutamine) chain promotes the hydrolysis of glutamine to ammonia, which is used by the large (or ammonia) chain to synthesize carbamoyl phosphate. Tetramer of heterodimers (alpha,beta)4. Mg(2+) is required as a cofactor. It depends on Mn(2+) as a cofactor.

The enzyme catalyses hydrogencarbonate + L-glutamine + 2 ATP + H2O = carbamoyl phosphate + L-glutamate + 2 ADP + phosphate + 2 H(+). It catalyses the reaction hydrogencarbonate + NH4(+) + 2 ATP = carbamoyl phosphate + 2 ADP + phosphate + 2 H(+). It participates in amino-acid biosynthesis; L-arginine biosynthesis; carbamoyl phosphate from bicarbonate: step 1/1. Its pathway is pyrimidine metabolism; UMP biosynthesis via de novo pathway; (S)-dihydroorotate from bicarbonate: step 1/3. Its function is as follows. Large subunit of the glutamine-dependent carbamoyl phosphate synthetase (CPSase). CPSase catalyzes the formation of carbamoyl phosphate from the ammonia moiety of glutamine, carbonate, and phosphate donated by ATP, constituting the first step of 2 biosynthetic pathways, one leading to arginine and/or urea and the other to pyrimidine nucleotides. The large subunit (synthetase) binds the substrates ammonia (free or transferred from glutamine from the small subunit), hydrogencarbonate and ATP and carries out an ATP-coupled ligase reaction, activating hydrogencarbonate by forming carboxy phosphate which reacts with ammonia to form carbamoyl phosphate. This is Carbamoyl phosphate synthase large chain from Streptococcus pyogenes serotype M5 (strain Manfredo).